A 743-amino-acid polypeptide reads, in one-letter code: Probable TonB-dependent receptor BfrD (743 aa).

The N-terminal stretch at 1 to 30 is a signal peptide; the sequence is MKFYSSHPMPESLAAAIAVPLLGLLPAAQA. A TBDR plug domain is found at 62–168; that stretch reads PLADTPRTVQ…AGGSINLVTK (107 aa). In terms of domain architecture, TBDR beta-barrel spans 173–743; the sequence is QDFTEVQAGI…SAMLTFKLSY (571 aa). The TonB C-terminal box motif lies at 726-743; it reads YAALGPGRSAMLTFKLSY.

It belongs to the TonB-dependent receptor family.

The protein resides in the cell outer membrane. Its function is as follows. Probably involved in iron transport. The polypeptide is Probable TonB-dependent receptor BfrD (bfrD) (Bordetella pertussis (strain Tohama I / ATCC BAA-589 / NCTC 13251)).